Reading from the N-terminus, the 187-residue chain is Adenylate kinase (187 aa).

Residue glycine 10–threonine 15 coordinates ATP. Positions serine 30–valine 59 are NMP. AMP is bound by residues threonine 31, arginine 36, asparagine 57–valine 59, glycine 85–arginine 88, and glutamine 92. The interval glycine 126–aspartate 136 is LID. Residue arginine 127 participates in ATP binding. The AMP site is built by arginine 133 and arginine 144. An ATP-binding site is contributed by glycine 172.

This sequence belongs to the adenylate kinase family. As to quaternary structure, monomer.

It is found in the cytoplasm. It carries out the reaction AMP + ATP = 2 ADP. The protein operates within purine metabolism; AMP biosynthesis via salvage pathway; AMP from ADP: step 1/1. Functionally, catalyzes the reversible transfer of the terminal phosphate group between ATP and AMP. Plays an important role in cellular energy homeostasis and in adenine nucleotide metabolism. The polypeptide is Adenylate kinase (Stenotrophomonas maltophilia (strain K279a)).